The sequence spans 276 residues: CASP-like protein 4A3 (276 aa).

Over residues 1–13 (MPSMSPSSISTEK) the composition is skewed to polar residues. A disordered region spans residues 1–76 (MPSMSPSSIS…PVKIEETPSP (76 aa)). At 1–126 (MPSMSPSSIS…RRSRREEIVK (126 aa)) the chain is on the cytoplasmic side. The segment covering 43-72 (SLDHSSDSEKEDEKRRPESRRNKNPVKIEE) has biased composition (basic and acidic residues). A helical membrane pass occupies residues 127–147 (FVALGFRLSEVVLALISFSIM). Residues 148 to 167 (AADKTKGWSGDSFDRYKEYR) are Extracellular-facing. A helical membrane pass occupies residues 168–188 (FCLSVNVVAFIYASFQACDLA). Residues 189 to 205 (YHLVKEKHLISHHLRPL) lie on the Cytoplasmic side of the membrane. A helical transmembrane segment spans residues 206–226 (FEFIIDQVLAYLLMCASTAAV). Residues 227–244 (TRVDDWVSNWGKDDFTEM) lie on the Extracellular side of the membrane. The helical transmembrane segment at 245–265 (ASASIAMSFLTFLAFAFSSLI) threads the bilayer. At 266–276 (SGYNLFNQDSL) the chain is on the cytoplasmic side.

Belongs to the Casparian strip membrane proteins (CASP) family. In terms of assembly, homodimer and heterodimers.

It localises to the cell membrane. This is CASP-like protein 4A3 from Arabidopsis lyrata subsp. lyrata (Lyre-leaved rock-cress).